A 222-amino-acid polypeptide reads, in one-letter code: MVLLSKFDFSGKESGKVELPDAFFAEGKEQSVKDYLVAIQANKRQWSACTRGRSEVSHSTRKPFRQKGTGNARQGCLAAPQFRGGGIVFGPKPKFDQHVRINKKERRAAIRLLLAQKIQTGKLIVADNSVFISSLNAPKTKEALRFLKECNVECRGVLFVDGLDHVGSNENLRLSVRNLAAVRGFTYGENINGYDIAAARNIVVSEKALELLVENLVSTTKD.

Residues 50-72 (TRGRSEVSHSTRKPFRQKGTGNA) form a disordered region.

The protein belongs to the universal ribosomal protein uL4 family. In terms of assembly, part of the 50S ribosomal subunit.

Its function is as follows. One of the primary rRNA binding proteins, this protein initially binds near the 5'-end of the 23S rRNA. It is important during the early stages of 50S assembly. It makes multiple contacts with different domains of the 23S rRNA in the assembled 50S subunit and ribosome. Forms part of the polypeptide exit tunnel. This Chlamydia muridarum (strain MoPn / Nigg) protein is Large ribosomal subunit protein uL4.